The sequence spans 330 residues: Ketol-acid reductoisomerase (NADP(+)) (330 aa).

Residues M1 to T181 enclose the KARI N-terminal Rossmann domain. NADP(+) contacts are provided by residues F24–Q27, R47, S50, S52, and D82–Q85. H107 is a catalytic residue. G133 lines the NADP(+) pocket. The KARI C-terminal knotted domain maps to T182–L327. Mg(2+) is bound by residues D190, E194, E226, and E230. Substrate is bound at residue S251.

This sequence belongs to the ketol-acid reductoisomerase family. Mg(2+) is required as a cofactor.

It catalyses the reaction (2R)-2,3-dihydroxy-3-methylbutanoate + NADP(+) = (2S)-2-acetolactate + NADPH + H(+). It carries out the reaction (2R,3R)-2,3-dihydroxy-3-methylpentanoate + NADP(+) = (S)-2-ethyl-2-hydroxy-3-oxobutanoate + NADPH + H(+). It functions in the pathway amino-acid biosynthesis; L-isoleucine biosynthesis; L-isoleucine from 2-oxobutanoate: step 2/4. The protein operates within amino-acid biosynthesis; L-valine biosynthesis; L-valine from pyruvate: step 2/4. Functionally, involved in the biosynthesis of branched-chain amino acids (BCAA). Catalyzes an alkyl-migration followed by a ketol-acid reduction of (S)-2-acetolactate (S2AL) to yield (R)-2,3-dihydroxy-isovalerate. In the isomerase reaction, S2AL is rearranged via a Mg-dependent methyl migration to produce 3-hydroxy-3-methyl-2-ketobutyrate (HMKB). In the reductase reaction, this 2-ketoacid undergoes a metal-dependent reduction by NADPH to yield (R)-2,3-dihydroxy-isovalerate. The protein is Ketol-acid reductoisomerase (NADP(+)) of Chlorobium phaeobacteroides (strain BS1).